The sequence spans 297 residues: Calponin-1 (297 aa).

The Calponin-homology (CH) domain maps to 28 to 131 (HQREQELREW…STLLALASMA (104 aa)). Calponin-like repeat units follow at residues 164–189 (IGLQMGTNKFASQQGMTAYGTRRHLY), 204–229 (ISLQMGTNKGASQAGMTAPGTKRQIF), and 243–268 (VSLQMGSNKGASQRGMTVYGLPRQVY). Position 170 is a phosphothreonine; by ROCK2 (Thr170). Residue Ser175 is modified to Phosphoserine; by ROCK2. Thr180 and Thr184 each carry phosphothreonine; by ROCK2. The residue at position 259 (Thr259) is a Phosphothreonine; by ROCK2.

The protein belongs to the calponin family. In terms of assembly, part of cGMP kinase signaling complex at least composed of ACTA2/alpha-actin, CNN1/calponin H1, PLN/phospholamban, PRKG1 and ITPR1. Smooth muscle, and tissues containing significant amounts of smooth muscle.

Functionally, thin filament-associated protein that is implicated in the regulation and modulation of smooth muscle contraction. It is capable of binding to actin, calmodulin and tropomyosin. The interaction of calponin with actin inhibits the actomyosin Mg-ATPase activity. This chain is Calponin-1 (CNN1), found in Homo sapiens (Human).